The chain runs to 1154 residues: PDZ domain-containing protein 8 (1154 aa).

Residues 2 to 24 (GLLLMILASAVLGSFLTLLAQFF) form a helical membrane-spanning segment. Positions 66 to 90 (DEEPSGAAPEGGATPTAAPETPAPP) are disordered. The segment covering 70–85 (SGAAPEGGATPTAAPE) has biased composition (low complexity). The region spanning 91 to 294 (TRETCYFLNA…LPNYKIRFKP (204 aa)) is the SMP-LTD domain. Residues 366–449 (TVELIKGNLQ…RVLVYYERPV (84 aa)) enclose the PDZ domain. A phosphoserine mark is found at Ser496, Ser521, and Ser538. The tract at residues 548–612 (GSHPLPPKIQ…SADAPNQAEP (65 aa)) is disordered. The Phorbol-ester/DAG-type zinc-finger motif lies at 840–891 (KHSFQDTQFQNPTWCDYCKKKVWTKAASQCMFCAYVCHKKCQEKCLAETSVC). The segment at 955–999 (RLSEPGTDLVEPSPKHTPNTSDNEGSDTEVCGPNSPSKRGNSTGI) is disordered. Phosphoserine occurs at positions 967 and 980. Polar residues predominate over residues 988–998 (NSPSKRGNSTG). Residues 1028–1063 (PTEERIQKLEFMLDKLQNEIDQELEHNNSLVREEKE) adopt a coiled-coil conformation. The span at 1132–1144 (SQLIDSQPFSSIS) shows a compositional bias: polar residues. The segment at 1132 to 1154 (SQLIDSQPFSSISDDLFGPSESV) is disordered.

In terms of assembly, interacts with MSN. As to quaternary structure, (Microbial infection) Interacts with HIV-1 Gag polyprotein p55.

It localises to the endoplasmic reticulum membrane. Its function is as follows. Molecular tethering protein that connects endoplasmic reticulum and mitochondria membranes. PDZD8-dependent endoplasmic reticulum-mitochondria membrane tethering is essential for endoplasmic reticulum-mitochondria Ca(2+) transfer. In neurons, involved in the regulation of dendritic Ca(2+) dynamics by regulating mitochondrial Ca(2+) uptake in neurons. Plays an indirect role in the regulation of cell morphology and cytoskeletal organization. May inhibit herpes simplex virus 1 infection at an early stage. The sequence is that of PDZ domain-containing protein 8 from Homo sapiens (Human).